Consider the following 263-residue polypeptide: Lens fiber major intrinsic protein (263 aa).

Topologically, residues 1-9 are cytoplasmic; sequence MWELRSASF. Residues 10 to 29 traverse the membrane as a helical segment; sequence WRAIFAEFFATLFYVFFGLG. Residues 30-41 are Extracellular-facing; sequence ASLRWTPGPLHV. The helical transmembrane segment at 42–59 threads the bilayer; the sequence is LQVALAFGLALATLVQAV. Residues 60–61 lie on the Cytoplasmic side of the membrane; it reads GH. An intramembrane region (discontinuously helical) is located at residues 62–77; that stretch reads ISGAHVNPAVTFAFLV. Residues 68-70 carry the NPA 1 motif; it reads NPA. Residues 78–82 are Cytoplasmic-facing; sequence GSQMS. The helical transmembrane segment at 83 to 106 threads the bilayer; sequence LLRAFCYMAAQLLGAVAGAAVLYS. Residues 107–127 are Extracellular-facing; it reads VTPPAVRGNLALNTLHPGVSV. Residues 128 to 148 traverse the membrane as a helical segment; the sequence is GQATTVEIFLTLQFVLCIFAT. The Cytoplasmic portion of the chain corresponds to 149 to 156; that stretch reads YDERRNGR. A helical transmembrane segment spans residues 157 to 175; the sequence is LGSVALAVGFSLTLGHLFG. Topologically, residues 176–178 are extracellular; the sequence is MYY. Positions 179–193 form an intramembrane region, discontinuously helical; the sequence is TGAGMNPARSFAPAI. Residues 184 to 186 carry the NPA 2 motif; that stretch reads NPA. Residues 194 to 200 are Extracellular-facing; the sequence is LTRNFTN. Residues 201-222 form a helical membrane-spanning segment; that stretch reads HWVYWVGPIIGGGLGSLLYDFL. Residues 223-263 lie on the Cytoplasmic side of the membrane; the sequence is LFPRLKSVSERLSILKGARPSDSNGQPEGTGEPVELKTQAL. Positions 227 to 237 are interaction with CALM; sequence LKSVSERLSIL. A phosphoserine mark is found at Ser235, Ser243, and Ser245. Residues 240-263 are disordered; it reads ARPSDSNGQPEGTGEPVELKTQAL. Asn246 is subject to Deamidated asparagine.

This sequence belongs to the MIP/aquaporin (TC 1.A.8) family. In terms of assembly, homotetramer; each monomer provides an independent water pore. Two homotetramers on opposing membranes can dimerize, forming a cell-cell junction. Interacts with CALM; the calcium-calmodulin/CALM complex interacts with the cytoplasmic domains of two aquaporins, leading to channel closure. Interacts with BFSP1 (via C-terminus); prevents calcium-dependent inhibition of the water channel activity. Post-translationally, subject to partial proteolytic cleavage in the eye lens core. Partial proteolysis promotes interactions between tetramers from adjoining membranes. Fatty acylated at Met-1 and Lys-238. The acyl modifications, in decreasing order of ion abundance, are: oleoyl (C18:1) &gt; palmitoyl (C16:0) &gt; stearoyl (C18:0) &gt; eicosenoyl (C20:1) &gt; dihomo-gamma-linolenoyl (C20:3) &gt; palmitoleoyl (C16:1) &gt; eicosadienoyl (C20:2).

It is found in the cell membrane. It localises to the cell junction. It catalyses the reaction H2O(in) = H2O(out). With respect to regulation, the water channel activity is inhibited by calcium through calmodulin/CALM. Aquaporins form homotetrameric transmembrane channels, with each monomer independently mediating water transport across the plasma membrane along its osmotic gradient. Specifically expressed in lens fiber cells, this aquaporin is crucial for maintaining lens water homeostasis and transparency. Beyond water permeability, it also acts as a cell-to-cell adhesion molecule, forming thin junctions between lens fiber cells that are essential for maintaining the ordered structure and transparency of the lens. This chain is Lens fiber major intrinsic protein, found in Canis lupus familiaris (Dog).